We begin with the raw amino-acid sequence, 117 residues long: Fluoride-specific ion channel FluC 2 (117 aa).

A run of 2 helical transmembrane segments spans residues 1–21 and 46–66; these read MISI…RSAI and FLIG…AFFV. Na(+) contacts are provided by Gly-71 and Thr-74. A helical transmembrane segment spans residues 95–115; it reads LFLNYSLLQFIIGFIACYIGY.

The protein belongs to the fluoride channel Fluc/FEX (TC 1.A.43) family.

Its subcellular location is the cell membrane. It catalyses the reaction fluoride(in) = fluoride(out). Na(+) is not transported, but it plays an essential structural role and its presence is essential for fluoride channel function. Its function is as follows. Fluoride-specific ion channel. Important for reducing fluoride concentration in the cell, thus reducing its toxicity. This Staphylococcus aureus (strain NCTC 8325 / PS 47) protein is Fluoride-specific ion channel FluC 2.